We begin with the raw amino-acid sequence, 142 residues long: Small ribosomal subunit protein uS9c (142 aa).

This sequence belongs to the universal ribosomal protein uS9 family.

The protein localises to the plastid. The protein resides in the chloroplast. This Stigeoclonium helveticum (Green alga) protein is Small ribosomal subunit protein uS9c (rps9).